The sequence spans 196 residues: Putative NADH dehydrogenase/NAD(P)H nitroreductase Rpal_4764 (196 aa).

Belongs to the nitroreductase family. HadB/RutE subfamily. FMN serves as cofactor.

The polypeptide is Putative NADH dehydrogenase/NAD(P)H nitroreductase Rpal_4764 (Rhodopseudomonas palustris (strain TIE-1)).